The chain runs to 139 residues: Large ribosomal subunit protein uL16 (139 aa).

Belongs to the universal ribosomal protein uL16 family. Part of the 50S ribosomal subunit.

In terms of biological role, binds 23S rRNA and is also seen to make contacts with the A and possibly P site tRNAs. The sequence is that of Large ribosomal subunit protein uL16 from Parvibaculum lavamentivorans (strain DS-1 / DSM 13023 / NCIMB 13966).